Consider the following 311-residue polypeptide: R2-like ligand binding oxidase (311 aa).

Residues Glu68, Glu101, and His104 each coordinate Mn(2+). Positions 71 to 162 (VTQDIQPFMA…AAQVRASVTY (92 aa)) form a cross-link, 3-(O4'-tyrosyl)-valine (Val-Tyr). Glu101 provides a ligand contact to Fe cation. Residues Glu167, Glu202, and His205 each contribute to the Fe cation site.

Belongs to the ribonucleoside diphosphate reductase small chain family. R2-like ligand binding oxidase subfamily. As to quaternary structure, homodimer. Requires Fe cation as cofactor. The cofactor is Mn(2+).

Probable oxidase that might be involved in lipid metabolism. The sequence is that of R2-like ligand binding oxidase from Mycolicibacterium paratuberculosis (strain ATCC BAA-968 / K-10) (Mycobacterium paratuberculosis).